The sequence spans 95 residues: Integration host factor subunit beta (95 aa).

This sequence belongs to the bacterial histone-like protein family. As to quaternary structure, heterodimer of an alpha and a beta chain.

This protein is one of the two subunits of integration host factor, a specific DNA-binding protein that functions in genetic recombination as well as in transcriptional and translational control. In Shewanella halifaxensis (strain HAW-EB4), this protein is Integration host factor subunit beta.